A 487-amino-acid chain; its full sequence is Transcription factor GTE5, chloroplastic (487 aa).

The N-terminal 32 residues, 1 to 32, are a transit peptide targeting the chloroplast; that stretch reads MSSEHISGGGASKTKKHKWSSSQNRPKPMGVS. 3 disordered regions span residues 1-48, 93-127, and 400-487; these read MSSE…NSFA, ANPGGSMAKSGVVGRSKKVKTGNGGGKKSGHGADK, and KNEA…DNGN. Positions 127–233 constitute a Bromo domain; that stretch reads KGTVQIFKNC…NMFEDKWVSI (107 aa). Residues 320-401 enclose the NET domain; sequence EEEAPVNNRD…GYKESLSKKN (82 aa). The span at 400–414 shows a compositional bias: basic and acidic residues; it reads KNEAHGFGSERDAES. A compositionally biased stretch (polar residues) spans 415 to 435; sequence VHNSIQEPTTLVSGTTTSRVT. Low complexity predominate over residues 451–487; the sequence is NNASGSSSSNSSSSDSGSCSSDTDSDSSSGRGSDNGN.

Interacts with SIZ1 (via PHD domain). Sumoylated by SIZ1.

The protein localises to the plastid. Its subcellular location is the chloroplast. This chain is Transcription factor GTE5, chloroplastic (GTE5), found in Arabidopsis thaliana (Mouse-ear cress).